The chain runs to 510 residues: Laccase (510 aa).

Plastocyanin-like domains follow at residues 45–79, 99–174, 242–317, and 372–506; these read PTKLWTYNGSLPGPTIKANRNEKVKVKWMNKLPLK, KTVV…LISD, YLEV…IVLK, and LTLT…MRPM. 4 residues coordinate Cu cation: histidine 103, histidine 105, histidine 151, and histidine 153. Residues histidine 419, histidine 422, histidine 424, histidine 491, cysteine 492, histidine 493, histidine 497, and methionine 502 each coordinate Cu cation.

The protein belongs to the multicopper oxidase family. Requires Cu(2+) as cofactor.

It carries out the reaction 4 hydroquinone + O2 = 4 benzosemiquinone + 2 H2O. With respect to regulation, resistant to alkali and organic solvents such as methanol, ethanol and acetone. Resistant to EDTA, which might be explained by the spatial protection of copper ions in the active sites. Inhibited by DMSO. Strongly inhibited by Fe(2+) and DTT. In terms of biological role, multicopper oxidase that catalyzes the oxidation of a variety of substrates, including phenolic and non-phenolic compounds. Substrates include 2,6-dimethoxyphenol (2,6-DMP) and the non-phenolic compound 2,2'-azino-bis(3-ethylbenzothiazoline-6-sulfonic acid) (ABTS). Cannot use guaiacol and catechol. This chain is Laccase, found in Bacillus stratosphericus.